The following is a 571-amino-acid chain: Proline--tRNA ligase (571 aa).

The protein belongs to the class-II aminoacyl-tRNA synthetase family. ProS type 1 subfamily. In terms of assembly, homodimer.

The protein resides in the cytoplasm. The enzyme catalyses tRNA(Pro) + L-proline + ATP = L-prolyl-tRNA(Pro) + AMP + diphosphate. Its function is as follows. Catalyzes the attachment of proline to tRNA(Pro) in a two-step reaction: proline is first activated by ATP to form Pro-AMP and then transferred to the acceptor end of tRNA(Pro). As ProRS can inadvertently accommodate and process non-cognate amino acids such as alanine and cysteine, to avoid such errors it has two additional distinct editing activities against alanine. One activity is designated as 'pretransfer' editing and involves the tRNA(Pro)-independent hydrolysis of activated Ala-AMP. The other activity is designated 'posttransfer' editing and involves deacylation of mischarged Ala-tRNA(Pro). The misacylated Cys-tRNA(Pro) is not edited by ProRS. The sequence is that of Proline--tRNA ligase from Aliivibrio salmonicida (strain LFI1238) (Vibrio salmonicida (strain LFI1238)).